A 322-amino-acid polypeptide reads, in one-letter code: tRNA uridine(34) hydroxylase (322 aa).

The Rhodanese domain occupies 125–219 (QDPNTIVIDA…YGKDPEVQGK (95 aa)). The active-site Cysteine persulfide intermediate is the Cys-179.

It belongs to the TrhO family.

It catalyses the reaction uridine(34) in tRNA + AH2 + O2 = 5-hydroxyuridine(34) in tRNA + A + H2O. Catalyzes oxygen-dependent 5-hydroxyuridine (ho5U) modification at position 34 in tRNAs. The sequence is that of tRNA uridine(34) hydroxylase from Bacillus subtilis (strain 168).